We begin with the raw amino-acid sequence, 208 residues long: CASP-like protein 4A4 (208 aa).

The Cytoplasmic segment spans residues 1–53; the sequence is MKELKDHVVVITYGPSSEASVTASPVSQQTPSLFAYSVTPSASRFSSRRASVH. Residues 54-74 traverse the membrane as a helical segment; the sequence is VIGLVLRFITMVLCFVSALSL. Residues 75–92 are Extracellular-facing; it reads AVNVQRPSKRHLTQNSSS. The N-linked (GlcNAc...) asparagine glycan is linked to Asn89. Residues 93–113 form a helical membrane-spanning segment; that stretch reads FASYPELLYCFGVAVIGFVYT. Residues 114–141 are Cytoplasmic-facing; that stretch reads SLQTFKGVCDITHRGVLISEPLSDYISF. The chain crosses the membrane as a helical span at residues 142–162; sequence IFDQVICYLLVSSSSVAIAWI. At 163 to 176 the chain is on the extracellular side; sequence QHINEDAIKTLRNN. N-linked (GlcNAc...) asparagine glycosylation is present at Asn175. The chain crosses the membrane as a helical span at residues 177–197; that stretch reads SIVSVSMSFSAFLVLTLSGLL. At 198-208 the chain is on the cytoplasmic side; the sequence is SGYKLCKRFMW.

Belongs to the Casparian strip membrane proteins (CASP) family. As to quaternary structure, homodimer and heterodimers.

It localises to the cell membrane. The protein is CASP-like protein 4A4 of Arabidopsis thaliana (Mouse-ear cress).